An 89-amino-acid chain; its full sequence is Large ribosomal subunit protein bL27 (89 aa).

The tract at residues 1 to 21 is disordered; sequence MAHKKAGGSSRNGRDSKGKRL.

It belongs to the bacterial ribosomal protein bL27 family.

The chain is Large ribosomal subunit protein bL27 from Bradyrhizobium diazoefficiens (strain JCM 10833 / BCRC 13528 / IAM 13628 / NBRC 14792 / USDA 110).